The following is a 224-amino-acid chain: Transcription cofactor HES-6 (224 aa).

The disordered stretch occupies residues 1–31 (MAPSQAPSRDRAGQEDEDRWEARGDRKARKP). Over residues 8-25 (SRDRAGQEDEDRWEARGD) the composition is skewed to basic and acidic residues. A bHLH domain is found at 25 to 77 (DRKARKPLVEKKRRARINESLQELRLLLAGTEVQAKLENAEVLELTVRRVQGA). The Orange domain maps to 96–129 (FAAGYIQCMHEVHTFVSTCQAIDATVSAELLNHL). A disordered region spans residues 146–209 (GDSLAGLPGG…GPDLVSTSLG (64 aa)). The span at 158–171 (RSSWPPGGSPESPL) shows a compositional bias: low complexity. A compositionally biased stretch (acidic residues) spans 181–190 (LCSDLEEIPE). Positions 221-224 (WRPW) match the WRPW motif motif.

As to quaternary structure, transcription repression requires formation of a complex with a corepressor protein of the Groucho/TLE family. Interacts with HES1. As to expression, expressed in both undifferentiated and differentiated cells. High levels of expression are observed in several embryonic tissues including the nervous system, muscle and thymus. In the nervous system, initially expressed in the closing neural tube, then in the spinal cord, cranial and dorsal root ganglia, and brain neuroepithelium. Also expressed in epithelial cells of the embryonic respiratory, urinary and digestive systems. In the limb buds, expressed in skeletal muscle and presumptive tendons.

It is found in the nucleus. Does not bind DNA itself but suppresses both HES1-mediated N box-dependent transcriptional repression and binding of HES1 to E box sequences. Also suppresses HES1-mediated inhibition of the heterodimer formed by ASCL1/MASH1 and TCF3/E47, allowing ASCL1 and TCF3 to up-regulate transcription in its presence. Promotes cell differentiation. This chain is Transcription cofactor HES-6, found in Mus musculus (Mouse).